The primary structure comprises 143 residues: D-aminoacyl-tRNA deacylase (143 aa).

Positions 135–136 (GP) match the Gly-cisPro motif, important for rejection of L-amino acids motif.

It belongs to the DTD family. In terms of assembly, homodimer.

The protein resides in the cytoplasm. The catalysed reaction is glycyl-tRNA(Ala) + H2O = tRNA(Ala) + glycine + H(+). It catalyses the reaction a D-aminoacyl-tRNA + H2O = a tRNA + a D-alpha-amino acid + H(+). An aminoacyl-tRNA editing enzyme that deacylates mischarged D-aminoacyl-tRNAs. Also deacylates mischarged glycyl-tRNA(Ala), protecting cells against glycine mischarging by AlaRS. Acts via tRNA-based rather than protein-based catalysis; rejects L-amino acids rather than detecting D-amino acids in the active site. By recycling D-aminoacyl-tRNA to D-amino acids and free tRNA molecules, this enzyme counteracts the toxicity associated with the formation of D-aminoacyl-tRNA entities in vivo and helps enforce protein L-homochirality. This is D-aminoacyl-tRNA deacylase from Nocardia farcinica (strain IFM 10152).